The sequence spans 58 residues: Large ribosomal subunit protein bL32 (58 aa).

Belongs to the bacterial ribosomal protein bL32 family.

This chain is Large ribosomal subunit protein bL32, found in Caldicellulosiruptor bescii (strain ATCC BAA-1888 / DSM 6725 / KCTC 15123 / Z-1320) (Anaerocellum thermophilum).